The primary structure comprises 503 residues: Maturase K (503 aa).

It belongs to the intron maturase 2 family. MatK subfamily.

It is found in the plastid. The protein localises to the chloroplast. Functionally, usually encoded in the trnK tRNA gene intron. Probably assists in splicing its own and other chloroplast group II introns. The polypeptide is Maturase K (Caragana arborescens (Siberian pea tree)).